The following is a 271-amino-acid chain: (+)-cis,trans-nepetalactol synthase NEPS1 (271 aa).

NAD(+) contacts are provided by residues 24–30 (GGASGIG), 49–51 (DIQ), 72–73 (DV), and N99. Substrate-binding residues include T154 and Y167. Residues Y167, K171, and 200-205 (VLTPLA) each bind NAD(+). Residue Y167 is the Proton acceptor of the active site.

This sequence belongs to the short-chain dehydrogenases/reductases (SDR) family.

It carries out the reaction (S)-8-oxocitronellyl enol = cis-trans-nepetalactol. It catalyses the reaction cis-cis-nepetalactol + NAD(+) = cis-cis-nepetalactone + NADH + H(+). The catalysed reaction is cis-trans-nepetalactol + NAD(+) = cis-trans-nepetalactone + NADH + H(+). Bifunctional enzyme that possesses cyclase and dehydrogenase activities. Functions as a non-oxidoreductive cyclase to promote the formation of cis-trans-nepetalactol. Functions as dehydrogenase to oxidize cis-cis-nepetalactol and cis-trans-nepetalactol into nepetalactones, metabolites that are both insect-repellent and have euphoric effect in cats. Binds NAD(+) as classical short-chain dehydrogenase/reductase (SDR), but does not utilize it for its redox-neutral cyclase activity. This chain is (+)-cis,trans-nepetalactol synthase NEPS1, found in Nepeta racemosa (Catmint).